We begin with the raw amino-acid sequence, 382 residues long: C-type lectin domain-containing protein 38 (382 aa).

At 1–40 (MAIFYDDPLERLNQPIKTKSYRKKQVVQRVHVFIFDNWKL) the chain is on the cytoplasmic side. The helical transmembrane segment at 41–61 (ILLGILNLIFLIIAIVFAILF) threads the bilayer. At 62–382 (FVGSADCAQL…FFLCKRAIDF (321 aa)) the chain is on the extracellular side. Residues 97–116 (NAITTTQGTPSNKTSTTTPS) are disordered. Residues 100 to 116 (TTTQGTPSNKTSTTTPS) show a composition bias toward low complexity. N108 and N189 each carry an N-linked (GlcNAc...) asparagine glycan. C-type lectin domains are found at residues 129 to 250 (VGTK…FVCE) and 264 to 377 (YNKN…FLCK). 4 disulfide bridges follow: C150/C249, C223/C241, C285/C376, and C348/C368.

Expressed in ventral cord motor neurons and PLM touch neurons.

Its subcellular location is the membrane. In terms of biological role, involved in negative modulation of unc-40-mediated axon outgrowth. Required for proper presynaptic development in axons that have reached their targets. May function in concert with E3 ubiquitin-protein ligase rpm-1 in regulating axon outgrowth. The protein is C-type lectin domain-containing protein 38 of Caenorhabditis elegans.